The sequence spans 243 residues: MAELLLGVNIDHIATLRNARGTAYPDPVQAAFIAEQAGADGITVHLREDRRHITDRDVRILRQTLDTRMNLEMAVTEEMLAIAVETKPHFCCLVPEKRQEVTTEGGLDVAGQRDKMRDACKRLADAGIQVSLFIDADEEQIKAAAEVGAPFIEIHTGCYADAKTDAEQAQELARIAKAATFAASLGLKVNAGHGLTYHNVKAIAAIPEMHELNIGHAIIGRAVMTGLKDAVAEMKRLMLEARG.

A 3-amino-2-oxopropyl phosphate-binding site is contributed by N9. 11–12 (DH) contributes to the 1-deoxy-D-xylulose 5-phosphate binding site. R20 contacts 3-amino-2-oxopropyl phosphate. The Proton acceptor role is filled by H45. 1-deoxy-D-xylulose 5-phosphate contacts are provided by R47 and H52. E72 functions as the Proton acceptor in the catalytic mechanism. T102 lines the 1-deoxy-D-xylulose 5-phosphate pocket. The active-site Proton donor is H193. 3-amino-2-oxopropyl phosphate is bound by residues G194 and 215-216 (GH).

It belongs to the PNP synthase family. Homooctamer; tetramer of dimers.

Its subcellular location is the cytoplasm. It carries out the reaction 3-amino-2-oxopropyl phosphate + 1-deoxy-D-xylulose 5-phosphate = pyridoxine 5'-phosphate + phosphate + 2 H2O + H(+). It participates in cofactor biosynthesis; pyridoxine 5'-phosphate biosynthesis; pyridoxine 5'-phosphate from D-erythrose 4-phosphate: step 5/5. Its function is as follows. Catalyzes the complicated ring closure reaction between the two acyclic compounds 1-deoxy-D-xylulose-5-phosphate (DXP) and 3-amino-2-oxopropyl phosphate (1-amino-acetone-3-phosphate or AAP) to form pyridoxine 5'-phosphate (PNP) and inorganic phosphate. This Escherichia coli O157:H7 protein is Pyridoxine 5'-phosphate synthase.